Reading from the N-terminus, the 967-residue chain is Phosphoenolpyruvate carboxylase 2 (967 aa).

Residue Ser-13 is modified to Phosphoserine. Residues His-174 and Lys-602 contribute to the active site.

This sequence belongs to the PEPCase type 1 family. Homotetramer. Requires Mg(2+) as cofactor.

It localises to the cytoplasm. The catalysed reaction is oxaloacetate + phosphate = phosphoenolpyruvate + hydrogencarbonate. Its pathway is photosynthesis; C3 acid pathway. By light-reversible phosphorylation. Functionally, through the carboxylation of phosphoenolpyruvate (PEP) it forms oxaloacetate, a four-carbon dicarboxylic acid source for the tricarboxylic acid cycle. This chain is Phosphoenolpyruvate carboxylase 2 (PEP4), found in Zea mays (Maize).